The sequence spans 329 residues: uncharacterized protein (329 aa).

The disordered stretch occupies residues methionine 1–serine 20.

This is an uncharacterized protein from Mycobacterium tuberculosis (strain CDC 1551 / Oshkosh).